Reading from the N-terminus, the 299-residue chain is ATP phosphoribosyltransferase (299 aa).

Belongs to the ATP phosphoribosyltransferase family. Long subfamily. Equilibrium between an active dimeric form, an inactive hexameric form and higher aggregates. Interconversion between the various forms is largely reversible and is influenced by the natural substrates and inhibitors of the enzyme. Requires Mg(2+) as cofactor.

It is found in the cytoplasm. The enzyme catalyses 1-(5-phospho-beta-D-ribosyl)-ATP + diphosphate = 5-phospho-alpha-D-ribose 1-diphosphate + ATP. It functions in the pathway amino-acid biosynthesis; L-histidine biosynthesis; L-histidine from 5-phospho-alpha-D-ribose 1-diphosphate: step 1/9. Its activity is regulated as follows. Feedback inhibited by histidine. Its function is as follows. Catalyzes the condensation of ATP and 5-phosphoribose 1-diphosphate to form N'-(5'-phosphoribosyl)-ATP (PR-ATP). Has a crucial role in the pathway because the rate of histidine biosynthesis seems to be controlled primarily by regulation of HisG enzymatic activity. This Escherichia coli O17:K52:H18 (strain UMN026 / ExPEC) protein is ATP phosphoribosyltransferase.